Consider the following 37-residue polypeptide: Photosystem I reaction center subunit VIII (37 aa).

A helical transmembrane segment spans residues 10–30; that stretch reads IFVPLVGLVFPAIAMASLSLY.

The protein belongs to the PsaI family.

It localises to the plastid. It is found in the chloroplast thylakoid membrane. In terms of biological role, may help in the organization of the PsaL subunit. In Gossypium barbadense (Sea Island cotton), this protein is Photosystem I reaction center subunit VIII.